The primary structure comprises 772 residues: NAD(P)H-quinone oxidoreductase subunit 5, chloroplastic (772 aa).

16 consecutive transmembrane segments (helical) span residues 9-29 (WIIP…LLLF), 40-60 (WSFP…YLSI), 89-109 (IDPL…LVLF), 125-145 (FAYL…SNLI), 147-167 (IYIF…FWFT), 185-205 (GDFG…SFEF), 220-240 (NQVH…GAVA), 259-279 (TPIS…FLVA), 290-312 (YIMN…LALA), 328-348 (LGYM…FHLI), 355-375 (ALLF…VGYS), 397-417 (TAFL…CFWS), 426-446 (WLYS…TAFY), 550-570 (LFSL…GIPF), 604-624 (FVTN…IATF), and 731-751 (IFIF…FFVL).

Belongs to the complex I subunit 5 family. In terms of assembly, NDH is composed of at least 16 different subunits, 5 of which are encoded in the nucleus.

Its subcellular location is the plastid. The protein localises to the chloroplast thylakoid membrane. The enzyme catalyses a plastoquinone + NADH + (n+1) H(+)(in) = a plastoquinol + NAD(+) + n H(+)(out). The catalysed reaction is a plastoquinone + NADPH + (n+1) H(+)(in) = a plastoquinol + NADP(+) + n H(+)(out). Functionally, NDH shuttles electrons from NAD(P)H:plastoquinone, via FMN and iron-sulfur (Fe-S) centers, to quinones in the photosynthetic chain and possibly in a chloroplast respiratory chain. The immediate electron acceptor for the enzyme in this species is believed to be plastoquinone. Couples the redox reaction to proton translocation, and thus conserves the redox energy in a proton gradient. In Oenothera argillicola (Appalachian evening primrose), this protein is NAD(P)H-quinone oxidoreductase subunit 5, chloroplastic (ndhF).